Reading from the N-terminus, the 435-residue chain is Bystin (435 aa).

The segment at 1 to 102 (MPKFKAARGA…VPQDGSDDEE (102 aa)) is disordered. At arginine 40 the chain carries Omega-N-methylarginine. Basic and acidic residues predominate over residues 71-87 (AEHGSGDRPAVPRERTT). Phosphoserine is present on serine 98. Threonine 154 bears the Phosphothreonine mark. 2 positions are modified to phosphoserine: serine 165 and serine 412.

It belongs to the bystin family. Binds trophinin, tastin and cytokeratins.

The protein localises to the cytoplasm. Its subcellular location is the nucleus. It localises to the nucleolus. Required for processing of 20S pre-rRNA precursor and biogenesis of 40S ribosomal subunits. This chain is Bystin (BYSL), found in Bos taurus (Bovine).